We begin with the raw amino-acid sequence, 231 residues long: ATP-dependent dethiobiotin synthetase BioD (231 aa).

13–18 (DVGKTV) serves as a coordination point for ATP. Mg(2+) is bound at residue Thr17. Lys38 is an active-site residue. ATP is bound by residues Asp55, 116 to 119 (EGAG), and 176 to 177 (NR). Residues Asp55 and Glu116 each contribute to the Mg(2+) site.

This sequence belongs to the dethiobiotin synthetase family. In terms of assembly, homodimer. The cofactor is Mg(2+).

The protein resides in the cytoplasm. It carries out the reaction (7R,8S)-7,8-diammoniononanoate + CO2 + ATP = (4R,5S)-dethiobiotin + ADP + phosphate + 3 H(+). Its pathway is cofactor biosynthesis; biotin biosynthesis; biotin from 7,8-diaminononanoate: step 1/2. In terms of biological role, catalyzes a mechanistically unusual reaction, the ATP-dependent insertion of CO2 between the N7 and N8 nitrogen atoms of 7,8-diaminopelargonic acid (DAPA, also called 7,8-diammoniononanoate) to form a ureido ring. The sequence is that of ATP-dependent dethiobiotin synthetase BioD from Vibrio cholerae serotype O1 (strain ATCC 39315 / El Tor Inaba N16961).